Reading from the N-terminus, the 241-residue chain is MAVLCSSSTVILSSSSVKSSGSERKSPFLGFSLTAISKPSVRVGIYANSKRGLQVKCEAEPTTTTSLVPANQRWMFDEEEANGPDIWNTTWYPKASDHVNTDKPWFVVDATDKILGRLASTIANHIRGKNLASYTPSVDMGAFVIVVNAEKVAVSGKKRNQKLYRRHSGRPGGMTVETFDQLQQRIPERIVEHAVRGMLPKGRLGRALFNHLKVYKGPDHPHEAQKPLDLPIRDKRIQLQK.

Residues 1 to 50 (MAVLCSSSTVILSSSSVKSSGSERKSPFLGFSLTAISKPSVRVGIYANSK) constitute a chloroplast transit peptide.

This sequence belongs to the universal ribosomal protein uL13 family. Part of the 50S ribosomal subunit.

The protein resides in the plastid. Its subcellular location is the chloroplast. The protein is Large ribosomal subunit protein uL13c (RPL13) of Arabidopsis thaliana (Mouse-ear cress).